The sequence spans 307 residues: Urease accessory protein UreD (307 aa).

This sequence belongs to the UreD family. In terms of assembly, ureD, UreF and UreG form a complex that acts as a GTP-hydrolysis-dependent molecular chaperone, activating the urease apoprotein by helping to assemble the nickel containing metallocenter of UreC. The UreE protein probably delivers the nickel.

The protein resides in the cytoplasm. Functionally, required for maturation of urease via the functional incorporation of the urease nickel metallocenter. The sequence is that of Urease accessory protein UreD from Prochlorococcus marinus (strain NATL2A).